A 144-amino-acid chain; its full sequence is Cathelicidin-4 (144 aa).

The N-terminal stretch at 1–29 is a signal peptide; the sequence is MQTQRASLSLGRWSLWLLLLGLVVPSASA. A propeptide spanning residues 30–130 is cleaved from the precursor; it reads QALSYREAVL…DLNCNELQSV (101 aa). Disulfide bonds link C85/C96 and C107/C124. Residue R143 is modified to Arginine amide.

The protein belongs to the cathelicidin family. Post-translationally, elastase might be responsible for its maturation. In terms of tissue distribution, large granules of neutrophils.

It localises to the secreted. In terms of biological role, potent microbicidal activity; active against S.aureus and E.coli. This is Cathelicidin-4 (CATHL4) from Bos taurus (Bovine).